Consider the following 554-residue polypeptide: uncharacterized protein (554 aa).

The Ca(2+) site is built by D327 and N328.

The protein belongs to the sulfatase family. The cofactor is Ca(2+).

It localises to the cytoplasm. Its subcellular location is the nucleus. This is an uncharacterized protein from Schizosaccharomyces pombe (strain 972 / ATCC 24843) (Fission yeast).